The sequence spans 203 residues: Snake venom metalloproteinase fibrolase (203 aa).

Glutamine 1 is modified (pyrrolidone carboxylic acid). In terms of domain architecture, Peptidase M12B spans 7–203 (RYVQLVIVAD…NNPQCILNKP (197 aa)). 3 cysteine pairs are disulfide-bonded: cysteine 118–cysteine 198, cysteine 158–cysteine 182, and cysteine 160–cysteine 165. A Zn(2+)-binding site is contributed by histidine 143. The active site involves glutamate 144. Residues histidine 147 and histidine 153 each coordinate Zn(2+).

The protein belongs to the venom metalloproteinase (M12B) family. P-I subfamily. In terms of assembly, monomer. Zn(2+) is required as a cofactor. As to expression, expressed by the venom gland.

The protein localises to the secreted. It carries out the reaction Hydrolysis of 14-Ala-|-Leu-15 in insulin B chain and 413-Lys-|-Leu-414 in alpha-chain of fibrinogen.. With respect to regulation, is inhibited by EDTA, o-phenanthroline and tetraethylenepentamine. Its function is as follows. Snake venom zinc metalloprotease that exhibits direct fibrinolytic activity. This Agkistrodon contortrix contortrix (Southern copperhead) protein is Snake venom metalloproteinase fibrolase.